Consider the following 190-residue polypeptide: Elongation factor P (190 aa).

Belongs to the elongation factor P family.

Its subcellular location is the cytoplasm. Its pathway is protein biosynthesis; polypeptide chain elongation. Functionally, involved in peptide bond synthesis. Stimulates efficient translation and peptide-bond synthesis on native or reconstituted 70S ribosomes in vitro. Probably functions indirectly by altering the affinity of the ribosome for aminoacyl-tRNA, thus increasing their reactivity as acceptors for peptidyl transferase. The polypeptide is Elongation factor P (efp) (Mycoplasma genitalium (strain ATCC 33530 / DSM 19775 / NCTC 10195 / G37) (Mycoplasmoides genitalium)).